Reading from the N-terminus, the 455-residue chain is MKLLVVGASYRTAPVAALERLAVAPADLPHALARLVAQPYVSEAVLVSTCNRVEVYAAVSGFHGGLGDICAVLAESTGVPPAALADHLYVHFDAAAVKHAFRVATGLDSMVVGEAQILGQLRDAYHWASGADTTGRLLHELMQQALRVGKRAHSETGIDRAGQSVVTAALGLATELLNSDLAARPALVVGAGAMGSLGVATLSRLGAGPVAVTNRGADRAVRLAESYGATAVPIADLTATLSTVDIVVAATAAPEAVLTREVVTRALADRKPSRGPLVLLDLAVPRDVEPGVADLPGVQVIDIDRMAALVANGPAAADAAAVERIVATEVDAFLNWLRGADVAPTVAALRGRADNVVTVELGRLAQRRPDLTDDQRDEVARTVHRVVQRLLHQPTVRVRQLAAEPGGDQYAALLRELFDLEVPQTSPVGTVPEVVVPEAVPPLGGAAEDPSTGGQ.

Residues 49–52 (TCNR), Ser-109, 114–116 (EAQ), and Gln-120 each bind substrate. Residue Cys-50 is the Nucleophile of the active site. Position 190–195 (190–195 (GAGAMG)) interacts with NADP(+).

This sequence belongs to the glutamyl-tRNA reductase family. In terms of assembly, homodimer.

It catalyses the reaction (S)-4-amino-5-oxopentanoate + tRNA(Glu) + NADP(+) = L-glutamyl-tRNA(Glu) + NADPH + H(+). It functions in the pathway porphyrin-containing compound metabolism; protoporphyrin-IX biosynthesis; 5-aminolevulinate from L-glutamyl-tRNA(Glu): step 1/2. Its function is as follows. Catalyzes the NADPH-dependent reduction of glutamyl-tRNA(Glu) to glutamate 1-semialdehyde (GSA). This Salinispora arenicola (strain CNS-205) protein is Glutamyl-tRNA reductase.